A 467-amino-acid polypeptide reads, in one-letter code: ATP-dependent protease ATPase subunit HslU (467 aa).

Residues valine 22 and 64–69 each bind ATP; that span reads GVGKTE. The tract at residues 149-192 is disordered; sequence QTNNPLESLFGGAIPNFGQNNEDEEEPPTEEIKTKRSEIKRQLE. Positions 178 to 192 are enriched in basic and acidic residues; that stretch reads EEIKTKRSEIKRQLE. 3 residues coordinate ATP: aspartate 280, glutamate 345, and arginine 417.

Belongs to the ClpX chaperone family. HslU subfamily. In terms of assembly, a double ring-shaped homohexamer of HslV is capped on each side by a ring-shaped HslU homohexamer. The assembly of the HslU/HslV complex is dependent on binding of ATP.

The protein resides in the cytoplasm. In terms of biological role, ATPase subunit of a proteasome-like degradation complex; this subunit has chaperone activity. The binding of ATP and its subsequent hydrolysis by HslU are essential for unfolding of protein substrates subsequently hydrolyzed by HslV. HslU recognizes the N-terminal part of its protein substrates and unfolds these before they are guided to HslV for hydrolysis. The chain is ATP-dependent protease ATPase subunit HslU from Staphylococcus aureus (strain MW2).